A 146-amino-acid polypeptide reads, in one-letter code: VHWTAEEKQLITQVWGKIDVAQIGGETLACLLVVYPWTQRFFPDFGNLSNAAAICGNAKVKAHGKKVLTSFGDAVKNLDNIKDTFAKLSELHCDKLHVDPVNFRLLGNVMITRLAAHFGKDFTPACHAAFQKLTGAVAHALARRYH.

The region spanning 2–146 (HWTAEEKQLI…VAHALARRYH (145 aa)) is the Globin domain. His63 and His92 together coordinate heme b.

Belongs to the globin family. Heterotetramer of two alpha chains and two beta chains. Red blood cells.

Involved in oxygen transport from the lung to the various peripheral tissues. This Iguana iguana (Common iguana) protein is Hemoglobin subunit beta-1 (HBB1).